We begin with the raw amino-acid sequence, 498 residues long: ATP synthase subunit beta, chloroplastic (498 aa).

172–179 (GGAGVGKT) is a binding site for ATP.

This sequence belongs to the ATPase alpha/beta chains family. In terms of assembly, F-type ATPases have 2 components, CF(1) - the catalytic core - and CF(0) - the membrane proton channel. CF(1) has five subunits: alpha(3), beta(3), gamma(1), delta(1), epsilon(1). CF(0) has four main subunits: a(1), b(1), b'(1) and c(9-12).

The protein resides in the plastid. It localises to the chloroplast thylakoid membrane. The enzyme catalyses ATP + H2O + 4 H(+)(in) = ADP + phosphate + 5 H(+)(out). Produces ATP from ADP in the presence of a proton gradient across the membrane. The catalytic sites are hosted primarily by the beta subunits. This chain is ATP synthase subunit beta, chloroplastic, found in Hyophorbe lagenicaulis (Bottle palm).